The following is a 121-amino-acid chain: Neuromedin-B (121 aa).

Positions M1–A24 are cleaved as a signal peptide. Methionine amide is present on M56. Positions S60–K121 are excised as a propeptide. Positions L61–Q80 are disordered.

It belongs to the bombesin/neuromedin-B/ranatensin family.

Its subcellular location is the secreted. The protein resides in the cell projection. It localises to the neuron projection. In terms of biological role, stimulates smooth muscle contraction. Induces sighing by acting directly on the pre-Botzinger complex, a cluster of several thousand neurons in the ventrolateral medulla responsible for inspiration during respiratory activity. Contributes to the induction of sneezing following exposure to chemical irritants or allergens which causes release of NMB by nasal sensory neurons and activation of NMBR-expressing neurons in the sneeze-evoking region of the brainstem. These in turn activate neurons of the caudal ventral respiratory group, giving rise to the sneezing response. Contributes to induction of acute itch, possibly through activation of the NMBR receptor on dorsal root ganglion neurons. Increases expression of NMBR and steroidogenic mediators STAR, CYP11A1 and HSD3B1 in Leydig cells, induces secretion of testosterone by Leydig cells and also promotes Leydig cell proliferation. Plays a role in the innate immune response to influenza A virus infection by enhancing interferon alpha expression and reducing expression of IL6. Plays a role in CSF1-induced proliferation of osteoclast precursors by contributing to the positive regulation of the expression of the CSF1 receptor CSF1R. This is Neuromedin-B (NMB) from Bos taurus (Bovine).